Consider the following 358-residue polypeptide: Hydroxyproline O-arabinosyltransferase 3 (358 aa).

The chain crosses the membrane as a helical; Signal-anchor span at residues 8–28; sequence LLFLLGFGFFVVTYNLLTLIV.

Ubiquitous.

It localises to the golgi apparatus. It is found in the cis-Golgi network membrane. The catalysed reaction is trans-4-hydroxy-L-prolyl-[protein] + UDP-beta-L-arabinofuranose = O-(beta-L-arabinofuranosyl)-trans-4-hydroxy-L-prolyl-[protein] + UDP + H(+). Its function is as follows. Glycosyltransferase involved in the O-arabinosylation of several proteins including extensins and small signaling peptides. Catalyzes the transfer of the initial L-arabinose to the hydroxyl group of Hyp residues. Contributes redundantly with HPAT1 and HPAT2 to arabinosylation of EXT3, but main contributor to arabinosylation of CLE peptides. The polypeptide is Hydroxyproline O-arabinosyltransferase 3 (Arabidopsis thaliana (Mouse-ear cress)).